Here is a 1014-residue protein sequence, read N- to C-terminus: Exportin-T (1014 aa).

This sequence belongs to the exportin family.

The protein resides in the nucleus. It localises to the cytoplasm. Its function is as follows. tRNA nucleus export receptor which facilitates tRNA translocation across the nuclear pore complex. Involved in pre-tRNA splicing, probably by affecting the interaction of pre-tRNA with splicing endonuclease. In Podospora anserina (strain S / ATCC MYA-4624 / DSM 980 / FGSC 10383) (Pleurage anserina), this protein is Exportin-T (LOS1).